The chain runs to 415 residues: [Pyruvate dehydrogenase (acetyl-transferring)] kinase isozyme 3, mitochondrial (415 aa).

Positions 131–362 (IEYKEKFGFD…DAVIYLKALS (232 aa)) constitute a Histidine kinase domain. Residue 247-254 (ELFKNSMR) coordinates ATP. Position 278 is an N6-succinyllysine (Lys278). ATP contacts are provided by residues Asp287, 306 to 307 (ST), and 323 to 328 (GFGYGL). Positions 383–415 (TPEADDWSNPSSEPRDASKYKAKQDKIKSNRTF) are disordered. Over residues 395 to 415 (EPRDASKYKAKQDKIKSNRTF) the composition is skewed to basic and acidic residues.

It belongs to the PDK/BCKDK protein kinase family. As to quaternary structure, homodimer. Interacts with the pyruvate dehydrogenase complex subunit DLAT, and is part of the multimeric pyruvate dehydrogenase complex that contains multiple copies of pyruvate dehydrogenase (E1), dihydrolipoamide acetyltransferase (DLAT, E2) and lipoamide dehydrogenase (DLD, E3).

It localises to the mitochondrion matrix. The enzyme catalyses L-seryl-[pyruvate dehydrogenase E1 alpha subunit] + ATP = O-phospho-L-seryl-[pyruvate dehydrogenase E1 alpha subunit] + ADP + H(+). In terms of biological role, inhibits pyruvate dehydrogenase activity by phosphorylation of the E1 subunit PDHA1, and thereby regulates glucose metabolism and aerobic respiration. Can also phosphorylate PDHA2. Decreases glucose utilization and increases fat metabolism in response to prolonged fasting, and as adaptation to a high-fat diet. Plays a role in glucose homeostasis and in maintaining normal blood glucose levels in function of nutrient levels and under starvation. Plays a role in the generation of reactive oxygen species. The protein is [Pyruvate dehydrogenase (acetyl-transferring)] kinase isozyme 3, mitochondrial (Pdk3) of Mus musculus (Mouse).